Reading from the N-terminus, the 665-residue chain is HDA1 complex subunit 2 (665 aa).

The tract at residues E181 to G219 is disordered. Residues A187–G205 are compositionally biased toward polar residues. Positions N457 to D625 form a coiled coil. The interval H644–I665 is disordered. Over residues S647–I665 the composition is skewed to low complexity.

This sequence belongs to the HDA2/3 family. HDA2 subfamily. As to quaternary structure, probable component of some histone deacetylase complex.

The protein resides in the nucleus. Functionally, required for activity of histone deacetylase complexes that are responsible for the deacetylation of lysine residues on the N-terminal part of the core histones (H2A, H2B, H3 and H4). Histone deacetylation gives a tag for epigenetic repression and plays an important role in transcriptional regulation, cell cycle progression and developmental events. The sequence is that of HDA1 complex subunit 2 (HDA2) from Eremothecium gossypii (strain ATCC 10895 / CBS 109.51 / FGSC 9923 / NRRL Y-1056) (Yeast).